A 280-amino-acid polypeptide reads, in one-letter code: Lipase chaperone (280 aa).

A helical transmembrane segment spans residues 5–22 (ALTIITIALGSLGAVYFL).

Belongs to the lipase chaperone family.

Its subcellular location is the cell inner membrane. May be involved in the folding of the extracellular lipase during its passage through the periplasm. The protein is Lipase chaperone (lifO) of Vibrio vulnificus (strain CMCP6).